A 103-amino-acid polypeptide reads, in one-letter code: uncharacterized protein (103 aa).

This is an uncharacterized protein from Microplitis demolitor (Parasitoid wasp).